Reading from the N-terminus, the 178-residue chain is Protein GrpE (178 aa).

Basic and acidic residues-rich tracts occupy residues 1-19 and 30-42; these read MAKHKQEEHPEDVEVKEEA and SPEKSELELANER. The interval 1-42 is disordered; that stretch reads MAKHKQEEHPEDVEVKEEAVETAEQAESASPEKSELELANER.

This sequence belongs to the GrpE family. As to quaternary structure, homodimer.

The protein resides in the cytoplasm. Participates actively in the response to hyperosmotic and heat shock by preventing the aggregation of stress-denatured proteins, in association with DnaK and GrpE. It is the nucleotide exchange factor for DnaK and may function as a thermosensor. Unfolded proteins bind initially to DnaJ; upon interaction with the DnaJ-bound protein, DnaK hydrolyzes its bound ATP, resulting in the formation of a stable complex. GrpE releases ADP from DnaK; ATP binding to DnaK triggers the release of the substrate protein, thus completing the reaction cycle. Several rounds of ATP-dependent interactions between DnaJ, DnaK and GrpE are required for fully efficient folding. This Streptococcus sanguinis (strain SK36) protein is Protein GrpE.